The primary structure comprises 554 residues: 3-(3-hydroxy-phenyl)propionate/3-hydroxycinnamic acid hydroxylase (554 aa).

Residues 17-46 (QVAI…VVEK) and 285-295 (FRIDRVLLAGD) each bind FAD.

The protein belongs to the PheA/TfdB FAD monooxygenase family. It depends on FAD as a cofactor.

It carries out the reaction 3-(3-hydroxyphenyl)propanoate + NADH + O2 + H(+) = 3-(2,3-dihydroxyphenyl)propanoate + NAD(+) + H2O. The catalysed reaction is (2E)-3-(3-hydroxyphenyl)prop-2-enoate + NADH + O2 + H(+) = (2E)-3-(2,3-dihydroxyphenyl)prop-2-enoate + NAD(+) + H2O. It functions in the pathway aromatic compound metabolism; 3-phenylpropanoate degradation. Catalyzes the insertion of one atom of molecular oxygen into position 2 of the phenyl ring of 3-(3-hydroxyphenyl)propionate (3-HPP) and hydroxycinnamic acid (3HCI). This chain is 3-(3-hydroxy-phenyl)propionate/3-hydroxycinnamic acid hydroxylase, found in Shigella sonnei (strain Ss046).